Here is a 432-residue protein sequence, read N- to C-terminus: NADH-quinone oxidoreductase subunit D (432 aa).

It belongs to the complex I 49 kDa subunit family. In terms of assembly, NDH-1 is composed of 14 different subunits. Subunits NuoB, C, D, E, F, and G constitute the peripheral sector of the complex.

It localises to the cell membrane. The catalysed reaction is a quinone + NADH + 5 H(+)(in) = a quinol + NAD(+) + 4 H(+)(out). In terms of biological role, NDH-1 shuttles electrons from NADH, via FMN and iron-sulfur (Fe-S) centers, to quinones in the respiratory chain. The immediate electron acceptor for the enzyme in this species is believed to be a menaquinone. Couples the redox reaction to proton translocation (for every two electrons transferred, four hydrogen ions are translocated across the cytoplasmic membrane), and thus conserves the redox energy in a proton gradient. In Mycobacterium marinum (strain ATCC BAA-535 / M), this protein is NADH-quinone oxidoreductase subunit D.